The chain runs to 129 residues: Replication initiation control protein YabA (129 aa).

Zn(2+) is bound by residues His-103, Cys-105, Cys-119, and Cys-122.

Belongs to the YabA family. In terms of assembly, homotetramer. Interacts with both DnaA and DnaN, acting as a bridge between these two proteins. Requires Zn(2+) as cofactor.

The protein resides in the cytoplasm. The protein localises to the nucleoid. Involved in control of chromosome replication initiation. Inhibits the cooperative binding of DnaA to the oriC region, thus negatively regulating initiation of chromosome replication. Inhibits the ability of DnaA-ATP to form a helix on DNA; does not disassemble preformed DnaA-DNA helices. Decreases the residence time of DnaA on the chromosome at its binding sites (oriC, replication forks and promoter-binding sites). Tethers DnaA to the replication machinery via the DNA polymerase beta sliding clamp subunit (dnaN). Associates with oriC and other DnaA targets on the chromosome in a DnaA-dependent manner. The polypeptide is Replication initiation control protein YabA (Listeria welshimeri serovar 6b (strain ATCC 35897 / DSM 20650 / CCUG 15529 / CIP 8149 / NCTC 11857 / SLCC 5334 / V8)).